We begin with the raw amino-acid sequence, 375 residues long: Chaperone protein DnaJ (375 aa).

In terms of domain architecture, J spans 5 to 69 (DYYEVLGVGK…QKRAHYDQFG (65 aa)). The CR-type zinc finger occupies 132-214 (GKETTIEIPR…CGGTGKVKKR (83 aa)). Positions 145, 148, 162, 165, 188, 191, 202, and 205 each coordinate Zn(2+). 4 CXXCXGXG motif repeats span residues 145–152 (CETCSGSG), 162–169 (CSHCGGSG), 188–195 (CHYCNGTG), and 202–209 (CSTCGGTG).

It belongs to the DnaJ family. Homodimer. Zn(2+) serves as cofactor.

Its subcellular location is the cytoplasm. Its function is as follows. Participates actively in the response to hyperosmotic and heat shock by preventing the aggregation of stress-denatured proteins and by disaggregating proteins, also in an autonomous, DnaK-independent fashion. Unfolded proteins bind initially to DnaJ; upon interaction with the DnaJ-bound protein, DnaK hydrolyzes its bound ATP, resulting in the formation of a stable complex. GrpE releases ADP from DnaK; ATP binding to DnaK triggers the release of the substrate protein, thus completing the reaction cycle. Several rounds of ATP-dependent interactions between DnaJ, DnaK and GrpE are required for fully efficient folding. Also involved, together with DnaK and GrpE, in the DNA replication of plasmids through activation of initiation proteins. This Bacillus licheniformis (strain ATCC 14580 / DSM 13 / JCM 2505 / CCUG 7422 / NBRC 12200 / NCIMB 9375 / NCTC 10341 / NRRL NRS-1264 / Gibson 46) protein is Chaperone protein DnaJ.